A 280-amino-acid chain; its full sequence is Foldase protein PrsA 4 (280 aa).

The first 21 residues, 1 to 21, serve as a signal peptide directing secretion; that stretch reads MKRKKLVIGSILMGMTLSLSA. Cysteine 22 carries N-palmitoyl cysteine lipidation. The S-diacylglycerol cysteine moiety is linked to residue cysteine 22. A PpiC domain is found at 132-222; that stretch reads KPKLQVSHIL…FGYHIIKLTD (91 aa).

Belongs to the PrsA family.

The protein localises to the cell membrane. The catalysed reaction is [protein]-peptidylproline (omega=180) = [protein]-peptidylproline (omega=0). In terms of biological role, plays a major role in protein secretion by helping the post-translocational extracellular folding of several secreted proteins. This is Foldase protein PrsA 4 (prsA4) from Bacillus cereus (strain ATCC 14579 / DSM 31 / CCUG 7414 / JCM 2152 / NBRC 15305 / NCIMB 9373 / NCTC 2599 / NRRL B-3711).